A 742-amino-acid polypeptide reads, in one-letter code: Kanadaptin (742 aa).

Residues 1-16 are compositionally biased toward polar residues; the sequence is MADILSQSETLASQDL. Positions 1–112 are disordered; that stretch reads MADILSQSET…PPWGGPATAP (112 aa). Residues 27 to 43 show a composition bias toward low complexity; the sequence is VSPAARSKAPASSSSNP. Ser-28 bears the Phosphoserine mark. Residues 72–82 show a composition bias toward basic and acidic residues; it reads GDFRSLQEEQS. The residue at position 90 (Ser-90) is a Phosphoserine. Pro residues predominate over residues 96–106; it reads RAPPYQEPPWG. The region spanning 135–195 is the FHA domain; that stretch reads CLFGRLSGCD…HGTFLNKTRI (61 aa). The tract at residues 254-282 is disordered; that stretch reads LGEDSDEEEEMDTSERKINAGSQDDEMGC. Residues 256–265 show a composition bias toward acidic residues; that stretch reads EDSDEEEEMD. Phosphoserine is present on residues Ser-258 and Ser-412. Residue Lys-441 forms a Glycyl lysine isopeptide (Lys-Gly) (interchain with G-Cter in SUMO2) linkage. The stretch at 443–476 forms a coiled coil; that stretch reads ETFESLVAKLNDAERELSEISERLKASSQVLSES. Ser-476 is subject to Phosphoserine. The tract at residues 565–742 is disordered; it reads LKTGTVGKLP…RTHLNDKYGY (178 aa). The span at 591–606 shows a compositional bias: acidic residues; that stretch reads PEVEEEEEEEEEEEKE. Residues 607–619 are compositionally biased toward basic and acidic residues; it reads KEEHEKKKLEDGS. Phosphoserine occurs at positions 655 and 658. Low complexity predominate over residues 699 to 708; that stretch reads PGPGKLPPTL. Basic and acidic residues predominate over residues 732–742; that stretch reads GRTHLNDKYGY.

As to expression, ubiquitously expressed.

The protein localises to the nucleus. It is found in the cytoplasm. The sequence is that of Kanadaptin (SLC4A1AP) from Homo sapiens (Human).